A 340-amino-acid chain; its full sequence is Uroporphyrinogen decarboxylase (340 aa).

Substrate-binding positions include 23-27 (RQAGR), Asp-72, Tyr-147, Thr-202, and His-316.

This sequence belongs to the uroporphyrinogen decarboxylase family. As to quaternary structure, homodimer.

It is found in the cytoplasm. The enzyme catalyses uroporphyrinogen III + 4 H(+) = coproporphyrinogen III + 4 CO2. Its pathway is porphyrin-containing compound metabolism; protoporphyrin-IX biosynthesis; coproporphyrinogen-III from 5-aminolevulinate: step 4/4. In terms of biological role, catalyzes the decarboxylation of four acetate groups of uroporphyrinogen-III to yield coproporphyrinogen-III. This Geobacter metallireducens (strain ATCC 53774 / DSM 7210 / GS-15) protein is Uroporphyrinogen decarboxylase.